The sequence spans 490 residues: UDP-N-acetylmuramoyl-L-alanyl-D-glutamate--2,6-diaminopimelate ligase (490 aa).

Residues Leu-22, Ser-24, and 39 to 41 (HQT) contribute to the UDP-N-acetyl-alpha-D-muramoyl-L-alanyl-D-glutamate site. 111 to 117 (GTNGKTT) serves as a coordination point for ATP. Residues Asn-152, 153–154 (TT), Ser-180, Gln-186, and Arg-188 contribute to the UDP-N-acetyl-alpha-D-muramoyl-L-alanyl-D-glutamate site. Lys-220 is modified (N6-carboxylysine). Residues Arg-385, 409-412 (DNPR), Gly-460, and Glu-464 contribute to the meso-2,6-diaminopimelate site. The short motif at 409 to 412 (DNPR) is the Meso-diaminopimelate recognition motif element.

The protein belongs to the MurCDEF family. MurE subfamily. Requires Mg(2+) as cofactor. Carboxylation is probably crucial for Mg(2+) binding and, consequently, for the gamma-phosphate positioning of ATP.

The protein resides in the cytoplasm. The catalysed reaction is UDP-N-acetyl-alpha-D-muramoyl-L-alanyl-D-glutamate + meso-2,6-diaminopimelate + ATP = UDP-N-acetyl-alpha-D-muramoyl-L-alanyl-gamma-D-glutamyl-meso-2,6-diaminopimelate + ADP + phosphate + H(+). The protein operates within cell wall biogenesis; peptidoglycan biosynthesis. Catalyzes the addition of meso-diaminopimelic acid to the nucleotide precursor UDP-N-acetylmuramoyl-L-alanyl-D-glutamate (UMAG) in the biosynthesis of bacterial cell-wall peptidoglycan. This Yersinia pestis protein is UDP-N-acetylmuramoyl-L-alanyl-D-glutamate--2,6-diaminopimelate ligase.